An 822-amino-acid polypeptide reads, in one-letter code: Probable phosphoketolase (822 aa).

The protein belongs to the XFP family. It depends on thiamine diphosphate as a cofactor.

This is Probable phosphoketolase from Nocardia farcinica (strain IFM 10152).